Consider the following 174-residue polypeptide: Co-chaperone protein HscB homolog (174 aa).

Positions 2 to 74 (NYFELFKFSP…IRRAEHMLSL (73 aa)) constitute a J domain.

It belongs to the HscB family. As to quaternary structure, interacts with HscA and stimulates its ATPase activity.

Functionally, co-chaperone involved in the maturation of iron-sulfur cluster-containing proteins. Seems to help targeting proteins to be folded toward HscA. This is Co-chaperone protein HscB homolog from Shewanella sp. (strain MR-4).